Here is a 157-residue protein sequence, read N- to C-terminus: Phosphopantetheine adenylyltransferase (157 aa).

Threonine 8 lines the substrate pocket. ATP contacts are provided by residues 8–9 (TF) and histidine 16. Positions 40, 72, and 86 each coordinate substrate. ATP is bound by residues 87–89 (GLR), glutamate 97, and 122–128 (YSFLSSS).

Belongs to the bacterial CoaD family. Homohexamer. Requires Mg(2+) as cofactor.

It is found in the cytoplasm. The enzyme catalyses (R)-4'-phosphopantetheine + ATP + H(+) = 3'-dephospho-CoA + diphosphate. Its pathway is cofactor biosynthesis; coenzyme A biosynthesis; CoA from (R)-pantothenate: step 4/5. Reversibly transfers an adenylyl group from ATP to 4'-phosphopantetheine, yielding dephospho-CoA (dPCoA) and pyrophosphate. This is Phosphopantetheine adenylyltransferase from Prochlorococcus marinus (strain MIT 9312).